Reading from the N-terminus, the 426-residue chain is Serine hydroxymethyltransferase (426 aa).

Residues Leu-113 and 117-119 (GHL) contribute to the (6S)-5,6,7,8-tetrahydrofolate site. Lys-222 carries the post-translational modification N6-(pyridoxal phosphate)lysine. 363–365 (SAF) contributes to the (6S)-5,6,7,8-tetrahydrofolate binding site.

It belongs to the SHMT family. In terms of assembly, homodimer. It depends on pyridoxal 5'-phosphate as a cofactor.

It is found in the cytoplasm. It catalyses the reaction (6R)-5,10-methylene-5,6,7,8-tetrahydrofolate + glycine + H2O = (6S)-5,6,7,8-tetrahydrofolate + L-serine. Its pathway is one-carbon metabolism; tetrahydrofolate interconversion. The protein operates within amino-acid biosynthesis; glycine biosynthesis; glycine from L-serine: step 1/1. Functionally, catalyzes the reversible interconversion of serine and glycine with tetrahydrofolate (THF) serving as the one-carbon carrier. This reaction serves as the major source of one-carbon groups required for the biosynthesis of purines, thymidylate, methionine, and other important biomolecules. Also exhibits THF-independent aldolase activity toward beta-hydroxyamino acids, producing glycine and aldehydes, via a retro-aldol mechanism. In Bacteroides thetaiotaomicron (strain ATCC 29148 / DSM 2079 / JCM 5827 / CCUG 10774 / NCTC 10582 / VPI-5482 / E50), this protein is Serine hydroxymethyltransferase.